We begin with the raw amino-acid sequence, 155 residues long: Cytochrome c-type biogenesis protein CcmE (155 aa).

At 1-8 the chain is on the cytoplasmic side; it reads MHPKRKQR. Residues 9–29 form a helical; Signal-anchor for type II membrane protein membrane-spanning segment; the sequence is LILVLFVVLVSSVGVSLTLYA. Residues 30 to 155 are Periplasmic-facing; the sequence is LNENINLFYP…KTCKGISYDS (126 aa). Heme-binding residues include H124 and Y128.

Belongs to the CcmE/CycJ family.

It localises to the cell inner membrane. In terms of biological role, heme chaperone required for the biogenesis of c-type cytochromes. Transiently binds heme delivered by CcmC and transfers the heme to apo-cytochromes in a process facilitated by CcmF and CcmH. The sequence is that of Cytochrome c-type biogenesis protein CcmE from Teredinibacter turnerae (strain ATCC 39867 / T7901).